Here is a 363-residue protein sequence, read N- to C-terminus: Peptide chain release factor 1 (363 aa).

An N5-methylglutamine modification is found at Gln-237.

The protein belongs to the prokaryotic/mitochondrial release factor family. In terms of processing, methylated by PrmC. Methylation increases the termination efficiency of RF1.

The protein localises to the cytoplasm. Functionally, peptide chain release factor 1 directs the termination of translation in response to the peptide chain termination codons UAG and UAA. This is Peptide chain release factor 1 (prfA) from Mycoplasma capricolum subsp. capricolum (strain California kid / ATCC 27343 / NCTC 10154).